The sequence spans 45 residues: Cytochrome b559 subunit beta (45 aa).

A helical transmembrane segment spans residues 20-36; it reads WLALHTLGIPTVFFLGA. His24 contributes to the heme binding site.

It belongs to the PsbE/PsbF family. As to quaternary structure, heterodimer of an alpha subunit and a beta subunit. PSII is composed of 1 copy each of membrane proteins PsbA, PsbB, PsbC, PsbD, PsbE, PsbF, PsbH, PsbI, PsbJ, PsbK, PsbL, PsbM, PsbT, PsbX, PsbY, PsbZ, Psb30/Ycf12, peripheral proteins PsbO, CyanoQ (PsbQ), PsbU, PsbV and a large number of cofactors. It forms dimeric complexes. The cofactor is heme b.

It is found in the cellular thylakoid membrane. This b-type cytochrome is tightly associated with the reaction center of photosystem II (PSII). PSII is a light-driven water:plastoquinone oxidoreductase that uses light energy to abstract electrons from H(2)O, generating O(2) and a proton gradient subsequently used for ATP formation. It consists of a core antenna complex that captures photons, and an electron transfer chain that converts photonic excitation into a charge separation. The sequence is that of Cytochrome b559 subunit beta from Synechococcus sp. (strain CC9902).